A 209-amino-acid polypeptide reads, in one-letter code: MFKFLKQVSDYAKETFQSAKYIGQGLSVTFDHMSRRPVTVQYPYEKLIPSERFRGRIHFEYDKCIACEVCVRVCPINLPVVDWEFNKETKKKKLKHYSIDFGVCIFCGNCVEYCPSNCLSMTEEYELAAYDRHELNYDNVALGRLPYKVTNDPMVTPMRELAYLPKGVIDPHTVPHTSRRAGLRPEEILEQIEAEKTAAEKTAAEITDK.

4Fe-4S ferredoxin-type domains lie at 55-84 (GRIH…VDWE) and 95-124 (KHYS…MTEE). Residues Cys64, Cys67, Cys70, Cys74, Cys104, Cys107, Cys110, and Cys114 each coordinate [4Fe-4S] cluster.

Belongs to the complex I 23 kDa subunit family. NDH-1 is composed of at least 11 different subunits. [4Fe-4S] cluster is required as a cofactor.

The protein resides in the cellular thylakoid membrane. The catalysed reaction is a plastoquinone + NADH + (n+1) H(+)(in) = a plastoquinol + NAD(+) + n H(+)(out). It catalyses the reaction a plastoquinone + NADPH + (n+1) H(+)(in) = a plastoquinol + NADP(+) + n H(+)(out). Functionally, NDH-1 shuttles electrons from an unknown electron donor, via FMN and iron-sulfur (Fe-S) centers, to quinones in the respiratory and/or the photosynthetic chain. The immediate electron acceptor for the enzyme in this species is believed to be plastoquinone. Couples the redox reaction to proton translocation, and thus conserves the redox energy in a proton gradient. The polypeptide is NAD(P)H-quinone oxidoreductase subunit I (Trichodesmium erythraeum (strain IMS101)).